Reading from the N-terminus, the 156-residue chain is Small ribosomal subunit protein uS7c (156 aa).

The protein belongs to the universal ribosomal protein uS7 family. Part of the 30S ribosomal subunit.

The protein resides in the plastid. It localises to the chloroplast. In terms of biological role, one of the primary rRNA binding proteins, it binds directly to 16S rRNA where it nucleates assembly of the head domain of the 30S subunit. The sequence is that of Small ribosomal subunit protein uS7c (rps7) from Pisum sativum (Garden pea).